Reading from the N-terminus, the 98-residue chain is uncharacterized protein (98 aa).

An MOSC domain is found at 30-98 (KKVVPSVKIH…RRKFCRVRLE (69 aa)).

This is an uncharacterized protein from Haemophilus influenzae (strain ATCC 51907 / DSM 11121 / KW20 / Rd).